A 231-amino-acid polypeptide reads, in one-letter code: Cytidylate kinase (231 aa).

Position 12–20 (12–20 (GPSGAGKGT)) interacts with ATP.

Belongs to the cytidylate kinase family. Type 1 subfamily.

Its subcellular location is the cytoplasm. The catalysed reaction is CMP + ATP = CDP + ADP. The enzyme catalyses dCMP + ATP = dCDP + ADP. This chain is Cytidylate kinase, found in Shewanella amazonensis (strain ATCC BAA-1098 / SB2B).